The sequence spans 431 residues: Glutamate-1-semialdehyde 2,1-aminomutase 2 (431 aa).

K268 is modified (N6-(pyridoxal phosphate)lysine).

The protein belongs to the class-III pyridoxal-phosphate-dependent aminotransferase family. HemL subfamily. In terms of assembly, homodimer. Pyridoxal 5'-phosphate is required as a cofactor.

The protein localises to the cytoplasm. It catalyses the reaction (S)-4-amino-5-oxopentanoate = 5-aminolevulinate. It functions in the pathway porphyrin-containing compound metabolism; protoporphyrin-IX biosynthesis; 5-aminolevulinate from L-glutamyl-tRNA(Glu): step 2/2. This is Glutamate-1-semialdehyde 2,1-aminomutase 2 from Anoxybacillus flavithermus (strain DSM 21510 / WK1).